The primary structure comprises 426 residues: MWWLLVCVVIGGFYTAWNIGANDVANAVGPSVGAGVLTLRQAVLIAAVFEFLGAVVLGDRVIGTIESGLVAPADHVLSSQDYVFGMTAALFATGVWLQIASFFGWPVSTTHAIVGGVLGFGIILKEDAVIYWDSCARIFVSWLASPIIGGYFAFLIFSFIRKAILYKRDPVSAMVRIAPFLSAIIIFALGLILILSGAVARVVAFPVAFRVVCGLVVFAFAFTIWGVHFFKLAVLPQKVGPGTLLDRLLSKSTDYGRQYLVVERIFAYLQIVIACFMSFAHGSNDVANAIAPVAGIYRALYPQSYSPKVLFIFMSLGGLGLVFGLATWGWRVIDTIGKKITELTPSRGFSVGMSSAITIAAASAFGFPISTTHVVVGAVLGVGLARGLQAINLRIIKDIVLSWFVTVPAGAALSIMFFLLLRAVFC.

A run of 11 helical transmembrane segments spans residues Met-1–Ala-21, Leu-37–Leu-57, Val-83–Phe-103, Gly-104–Leu-124, Val-140–Ile-160, Ala-183–Val-203, Val-207–Val-227, Leu-260–Ala-280, Val-309–Gly-329, Phe-365–Ala-385, and Ile-399–Leu-419.

It belongs to the inorganic phosphate transporter (PiT) (TC 2.A.20) family.

Its subcellular location is the cell membrane. Its function is as follows. Potential transporter for phosphate. The protein is Putative phosphate permease TC_0064 of Chlamydia muridarum (strain MoPn / Nigg).